The chain runs to 197 residues: Probable molybdenum cofactor guanylyltransferase (197 aa).

Residues 10 to 12 (LCG), Lys22, Asp73, and Asp102 each bind GTP. Residue Asp102 participates in Mg(2+) binding.

This sequence belongs to the MobA family. Requires Mg(2+) as cofactor.

It is found in the cytoplasm. It carries out the reaction Mo-molybdopterin + GTP + H(+) = Mo-molybdopterin guanine dinucleotide + diphosphate. In terms of biological role, transfers a GMP moiety from GTP to Mo-molybdopterin (Mo-MPT) cofactor (Moco or molybdenum cofactor) to form Mo-molybdopterin guanine dinucleotide (Mo-MGD) cofactor. The polypeptide is Probable molybdenum cofactor guanylyltransferase (Methanothermobacter thermautotrophicus (strain ATCC 29096 / DSM 1053 / JCM 10044 / NBRC 100330 / Delta H) (Methanobacterium thermoautotrophicum)).